The sequence spans 1184 residues: uncharacterized protein (1184 aa).

Disordered stretches follow at residues 115–152 and 397–426; these read ETSS…AHVS and TYKP…VPER. 2 stretches are compositionally biased toward polar residues: residues 137–152 and 397–421; these read HVMN…AHVS and TYKP…TSHN. Phosphoserine is present on serine 686. 4 stretches are compositionally biased toward basic and acidic residues: residues 705 to 767, 783 to 792, 849 to 863, and 891 to 902; these read LSER…ESAH, FEHETEPSHY, SHAH…RDLG, and YLHDEKTRDTLT. Disordered regions lie at residues 705–870 and 890–1017; these read LSER…FGDV and DYLH…SSPK. Serine 905 carries the post-translational modification Phosphoserine. Positions 920–932 are enriched in basic and acidic residues; it reads EDHPHASEAERAH. A compositionally biased stretch (low complexity) spans 941 to 950; sequence SSESSPESQS. The span at 999 to 1011 shows a compositional bias: basic and acidic residues; sequence PRERLDDNAKEIL. A Phosphoserine modification is found at serine 1018. Disordered regions lie at residues 1029–1107 and 1135–1154; these read NRKD…IGTQ and DVDN…KSRP. Basic and acidic residues predominate over residues 1032–1045; sequence DKAAVKRMLEEDSS. A compositionally biased stretch (polar residues) spans 1073–1107; sequence PAVNNSTKPVAVTSKNGHSRNGSHAAHSNNVIGTQ. Positions 1138-1150 are enriched in low complexity; the sequence is NVVSGHSNVNGVS.

Its subcellular location is the cytoplasm. This is an uncharacterized protein from Schizosaccharomyces pombe (strain 972 / ATCC 24843) (Fission yeast).